A 149-amino-acid chain; its full sequence is Calmodulin (149 aa).

EF-hand domains are found at residues 8–43 (EQIS…LGQN), 44–79 (PTEA…KMQD), 81–116 (DSEE…LGEK), and 117–149 (LTDE…MMSK). Ca(2+) is bound by residues aspartate 21, aspartate 23, aspartate 25, threonine 27, glutamate 32, aspartate 57, aspartate 59, serine 61, threonine 63, glutamate 68, aspartate 94, aspartate 96, asparagine 98, and glutamate 105. Lysine 116 carries the N6,N6,N6-trimethyllysine modification. Aspartate 130, aspartate 132, aspartate 134, glutamine 136, and glutamate 141 together coordinate Ca(2+).

The protein belongs to the calmodulin family.

Calmodulin mediates the control of a large number of enzymes, ion channels and other proteins by Ca(2+). Among the enzymes to be stimulated by the calmodulin-Ca(2+) complex are a number of protein kinases and phosphatases. The sequence is that of Calmodulin from Trypanosoma brucei brucei.